Here is a 549-residue protein sequence, read N- to C-terminus: Membrane protein insertase YidC (549 aa).

The helical transmembrane segment at 8 to 28 (VLLATVLSVAVLIVWQFVFPS) threads the bilayer. The segment covering 29–39 (PKPKPQPPKPP) has biased composition (pro residues). Residues 29–68 (PKPKPQPPKPPEAAQRAEAPAAPAPGQPAAQAPAPAVPQD) are disordered. Low complexity-rich tracts occupy residues 40–49 (EAAQRAEAPA) and 55–68 (QPAA…VPQD). 4 helical membrane-spanning segments follow: residues 328 to 348 (IDYG…LFVM), 354 to 374 (LVAN…VLLY), 424 to 444 (LGGC…YATL), and 502 to 522 (PGFF…YIFV).

The protein belongs to the OXA1/ALB3/YidC family. Type 1 subfamily. Interacts with the Sec translocase complex via SecD. Specifically interacts with transmembrane segments of nascent integral membrane proteins during membrane integration.

Its subcellular location is the cell inner membrane. Required for the insertion and/or proper folding and/or complex formation of integral membrane proteins into the membrane. Involved in integration of membrane proteins that insert both dependently and independently of the Sec translocase complex, as well as at least some lipoproteins. Aids folding of multispanning membrane proteins. In Anaeromyxobacter sp. (strain Fw109-5), this protein is Membrane protein insertase YidC.